The following is a 432-amino-acid chain: Endosome-associated-trafficking regulator 1 (432 aa).

Ser-18 carries the phosphoserine modification. Over residues 126-143 the composition is skewed to basic and acidic residues; that stretch reads DTTTSRIYPKEASRHPLG. The disordered stretch occupies residues 126–145; sequence DTTTSRIYPKEASRHPLGLE. Ser-148 carries the post-translational modification Phosphoserine. A required for interaction with PTPN13 region spans residues 174-196; the sequence is LEEDEDDGWNITYLPSAVDQTHS. The segment at 226 to 250 is disordered; that stretch reads PPWTLSDTDSRISPASPAGSPNADF. Phosphoserine occurs at positions 241 and 245. Coiled coils occupy residues 262-289 and 315-370; these read LRTL…VQSF and FHDL…LRSG.

It belongs to the ENTR1 family. In terms of assembly, found in a complex with ENTR1, PTPN13 and GIT1. Interacts with PTPN13 (via the FERM domain). Interacts (via N-terminus) with GIT1 (via N- and C-terminus); this interaction is direct. Interacts with NOD2. Interacts (via N-terminus) with IFT88. Interacts with VPS35. Post-translationally, phosphorylated.

The protein localises to the cytoplasm. The protein resides in the early endosome. It is found in the endosome. Its subcellular location is the recycling endosome. It localises to the midbody. The protein localises to the cytoskeleton. The protein resides in the microtubule organizing center. It is found in the centrosome. Its subcellular location is the cilium basal body. In terms of biological role, may be involved in modulation of TNF response. May be involved in presentation of TNFRSF1A on the cell surface. Involved in the endosome-to-plasma membrane trafficking and recycling of SNX27-retromer-dependent cargo proteins, such as GLUT1. Involved in the regulation of cytokinesis; the function may involve PTPN13 and GIT1. Endosome-associated protein that plays a role in membrane receptor sorting, cytokinesis and ciliogenesis. Involved in the endosome-to-plasma membrane trafficking and recycling of SNX27-retromer-dependent cargo proteins, such as GLUT1. Involved in the regulation of cytokinesis; the function may involve PTPN13 and GIT1. Plays a role in the formation of cilia. Involved in cargo protein localization, such as PKD2, at primary cilia. Involved in the presentation of the tumor necrosis factor (TNF) receptor TNFRSF1A on the cell surface, and hence in the modulation of the TNF-induced apoptosis. This chain is Endosome-associated-trafficking regulator 1, found in Mus musculus (Mouse).